A 622-amino-acid chain; its full sequence is 4-hydroxyphenylalkanoate adenylyltransferase (622 aa).

Belongs to the ATP-dependent AMP-binding enzyme family.

It catalyses the reaction 17-(4-hydroxyphenyl)heptadecanoate + holo-[(phenol)carboxyphthiodiolenone synthase] + ATP = 17-(4-hydroxyphenyl)heptadecanoyl-[(phenol)carboxyphthiodiolenone synthase] + AMP + diphosphate. It carries out the reaction 19-(4-hydroxyphenyl)nonadecanoate + holo-[(phenol)carboxyphthiodiolenone synthase] + ATP = 19-(4-hydroxyphenyl)nonadecanoyl-[(phenol)carboxyphthiodiolenone synthase] + AMP + diphosphate. The protein operates within lipid metabolism; fatty acid biosynthesis. Catalyzes the activation of long-chain fatty acids as acyl-adenylates (acyl-AMP), which are then transferred to the multifunctional polyketide synthase PpsA for further chain extension. Involved in the biosynthesis of phenolphthiocerol, which is an important intermediate in the biosynthesis of phenolic glycolipid (PGL), also called mycosid B. In Mycobacterium marinum (strain ATCC BAA-535 / M), this protein is 4-hydroxyphenylalkanoate adenylyltransferase (fadD29).